The primary structure comprises 491 residues: Stage IV sporulation protein A (491 aa).

The Walker A motif; involved in ATP-binding motif lies at 23-30 (GPVRTGKS). 23-30 (GPVRTGKS) is an ATP binding site. Residues 334-362 (QLLSLITRLSKVKNEYDKIESALIDAKIK) adopt a coiled-coil conformation.

As to quaternary structure, interacts (via Walker A motif) with SipL (via C-terminus LysM domain).

It is found in the cytoplasm. The catalysed reaction is ATP + H2O = ADP + phosphate + H(+). In terms of biological role, ATPase. Has a role at an early stage in the morphogenesis of the spore coat and is required for proper coat localization to the forespore. This Clostridioides difficile (strain 630) (Peptoclostridium difficile) protein is Stage IV sporulation protein A.